The chain runs to 88 residues: Small ribosomal subunit protein bS20 (88 aa).

The disordered stretch occupies residues 1–27; that stretch reads MANSKSAKKRALQSEKRRQHNASRRSM.

It belongs to the bacterial ribosomal protein bS20 family.

In terms of biological role, binds directly to 16S ribosomal RNA. The chain is Small ribosomal subunit protein bS20 from Shewanella sp. (strain ANA-3).